A 140-amino-acid polypeptide reads, in one-letter code: Profilin-2 (140 aa).

Residue A2 is modified to N-acetylalanine.

This sequence belongs to the profilin family. As to quaternary structure, occurs in many kinds of cells as a complex with monomeric actin in a 1:1 ratio. Interacts with PFN2. In terms of assembly, interacts with ACTMAP (via N-terminus); the interaction may facilitate efficient cleavage of the acetylated N-terminus of immature actin by ACTMAP. Highly expressed in brain, skeletal muscle and kidney and less strongly in heart, placenta, lung and liver.

It is found in the cytoplasm. It localises to the cytoskeleton. Binds to actin and affects the structure of the cytoskeleton. At high concentrations, profilin prevents the polymerization of actin, whereas it enhances it at low concentrations. By binding to PIP2, it inhibits the formation of IP3 and DG. The sequence is that of Profilin-2 (PFN2) from Homo sapiens (Human).